Here is a 572-residue protein sequence, read N- to C-terminus: 2-succinyl-5-enolpyruvyl-6-hydroxy-3-cyclohexene-1-carboxylate synthase (572 aa).

This sequence belongs to the TPP enzyme family. MenD subfamily. In terms of assembly, homodimer. Mg(2+) serves as cofactor. It depends on Mn(2+) as a cofactor. The cofactor is thiamine diphosphate.

The enzyme catalyses isochorismate + 2-oxoglutarate + H(+) = 5-enolpyruvoyl-6-hydroxy-2-succinyl-cyclohex-3-ene-1-carboxylate + CO2. Its pathway is quinol/quinone metabolism; 1,4-dihydroxy-2-naphthoate biosynthesis; 1,4-dihydroxy-2-naphthoate from chorismate: step 2/7. It participates in quinol/quinone metabolism; menaquinone biosynthesis. In terms of biological role, catalyzes the thiamine diphosphate-dependent decarboxylation of 2-oxoglutarate and the subsequent addition of the resulting succinic semialdehyde-thiamine pyrophosphate anion to isochorismate to yield 2-succinyl-5-enolpyruvyl-6-hydroxy-3-cyclohexene-1-carboxylate (SEPHCHC). The sequence is that of 2-succinyl-5-enolpyruvyl-6-hydroxy-3-cyclohexene-1-carboxylate synthase from Shewanella amazonensis (strain ATCC BAA-1098 / SB2B).